A 33-amino-acid polypeptide reads, in one-letter code: Brevinin-2JD (33 aa).

A disulfide bridge connects residues cysteine 27 and cysteine 33.

Expressed by the skin glands.

It is found in the secreted. Its function is as follows. Has antibacterial activity against E.coli ATCC 25992 (MIC=38 uM), E.coli CIB 84492 (MIC=38 uM), S.aureus ATCC 25923 (MIC=19 uM) and S.aureus CIB 85462 (MIC=19 uM). Has antifungal activity against C.albicans (MIC=19 uM). Has weak hemolytic activity against rabbit erythrocytes. This Odorrana jingdongensis (Jingdong frog) protein is Brevinin-2JD.